The sequence spans 176 residues: Cathelicidin-2 (176 aa).

The signal sequence occupies residues M1–A29. Pyrrolidone carboxylic acid is present on Q30. Positions Q30–V130 are excised as a propeptide. Intrachain disulfides connect C85-C96 and C107-C124. The disordered stretch occupies residues P135–R176. Positions I141–R176 are enriched in pro residues. A Proline amide modification is found at P173. The propeptide at G174 to R176 is removed in mature form.

The protein belongs to the cathelicidin family. Post-translationally, elastase is responsible for its maturation.

Its subcellular location is the secreted. Binds to the lipid A moiety of bacterial lipopolysaccharides (LPS), a glycolipid present in the outer membrane of all Gram-negative bacteria. Shows a potent antimicrobial activity against the Gram-negative bacteria E.coli, S.typhimurium and P.aeruginosa. Less active against the Gram-positive bacteria S.aureus, L.monocytogenes and B.subtilis. In Capra hircus (Goat), this protein is Cathelicidin-2 (CATHL2).